A 1583-amino-acid polypeptide reads, in one-letter code: Transcriptional activator GLI3 (1583 aa).

Met1 bears the N-acetylmethionine mark. Polar residues-rich tracts occupy residues Met1–Ala10 and Ile58–Ser78. Residues Met1 to Ser78 form a disordered region. Arg175 is modified (omega-N-methylarginine). A disordered region spans residues Gln368 to Glu475. Over residues Val403 to Ser421 the composition is skewed to low complexity. Lys438 is covalently cross-linked (Glycyl lysine isopeptide (Lys-Gly) (interchain with G-Cter in SUMO2)). A compositionally biased stretch (polar residues) spans Ser448–Gly457. The segment covering Val461 to Pro474 has biased composition (basic and acidic residues). Residue Lys462 forms a Glycyl lysine isopeptide (Lys-Gly) (interchain with G-Cter in SUMO2) linkage. 5 consecutive C2H2-type zinc fingers follow at residues Thr480–His505, Phe513–His540, His546–His570, Tyr576–His601, and Tyr607–His632. A disordered region spans residues Asp620–Leu728. Positions His632 to Pro648 are enriched in basic and acidic residues. Phosphoserine is present on Ser664. The segment covering Ser684–Lys699 has biased composition (basic and acidic residues). Low complexity predominate over residues Ser703 to Ser726. Residues Asp745–Asn845 form a mediates interaction with DZIP1 region. Lys773 is covalently cross-linked (Glycyl lysine isopeptide (Lys-Gly) (interchain with G-Cter in ubiquitin)). Residue Lys779 forms a Glycyl lysine isopeptide (Lys-Gly) (interchain with G-Cter in SUMO2); alternate linkage. Lys779 participates in a covalent cross-link: Glycyl lysine isopeptide (Lys-Gly) (interchain with G-Cter in ubiquitin); alternate. Residues Lys784 and Lys800 each participate in a glycyl lysine isopeptide (Lys-Gly) (interchain with G-Cter in ubiquitin) cross-link. Residues Gly809 to Pro828 form a disordered region. Polar residues predominate over residues Asn810 to Ser820. Ser849, Ser865, Ser877, Ser907, Ser980, and Ser1006 each carry phosphoserine; by PKA. Residues Arg863–Ser880 are compositionally biased toward low complexity. The tract at residues Arg863–Leu918 is disordered. Residues Glu1164–Pro1189 are disordered. Low complexity predominate over residues Ser1166–Ser1175.

This sequence belongs to the GLI C2H2-type zinc-finger protein family. As to quaternary structure, the phosphorylated form interacts with BTRC. The full-length GLI3 form (GLI3FL) interacts with SUFU and this interaction regulates the formation of either repressor or activator forms of GLI3. Its association with SUFU is regulated by Hh signaling and dissociation of the SUFU-GLI3 interaction requires the presence of the ciliary motor KIF3A. Interacts with KIF7. The activator form of GLI3 (GLI3A) but not the repressor form (GLI3R) can interact with TRPS1. Interacts with ZIC1. Interacts with ZIC3 (via C2H2-type domains 3, 4 and 5); the interaction enhances its transcriptional activity. Interacts with WRD11; the interaction associates EMX1 with GLI3. Interacts with DZIP1; retains GLI3 within the cytoplasm. In terms of processing, phosphorylated by DYRK2 (in vitro). Phosphorylated on multiple sites by protein kinase A (PKA) and phosphorylation by PKA primes further phosphorylation by CK1 and GSK3. Phosphorylation is essential for its proteolytic processing. Post-translationally, transcriptional repressor GLI3R, a C-terminally truncated form, is generated from the full-length GLI3 protein (GLI3FL/GLI3-190) through proteolytic processing. This process requires PKA-primed phosphorylation of GLI3, ubiquitination of GLI3 and the presence of BTRC. GLI3FL is complexed with SUFU in the cytoplasm and is maintained in a neutral state. Without the Hh signal, the SUFU-GLI3 complex is recruited to cilia, leading to the efficient processing of GLI3FL into GLI3R. GLI3R formation leads to its dissociation from SUFU, allowing it to translocate into the nucleus, and repress Hh target genes. When Hh signaling is initiated, SUFU dissociates from GLI3FL and this has two consequences. First, GLI3R production is halted. Second, free GLI3FL translocates to the nucleus, where it is phosphorylated, destabilized, and converted to a transcriptional activator (GLI3A). Phosphorylated in vitro by ULK3.

It is found in the nucleus. The protein localises to the cytoplasm. It localises to the cell projection. The protein resides in the cilium. Its function is as follows. Has a dual function as a transcriptional activator and a repressor of the sonic hedgehog (Shh) pathway, and plays a role in limb development. The full-length GLI3 form (GLI3FL) after phosphorylation and nuclear translocation, acts as an activator (GLI3A) while GLI3R, its C-terminally truncated form, acts as a repressor. A proper balance between the GLI3 activator and the repressor GLI3R, rather than the repressor gradient itself or the activator/repressor ratio gradient, specifies limb digit number and identity. In concert with TRPS1, plays a role in regulating the size of the zone of distal chondrocytes, in restricting the zone of PTHLH expression in distal cells and in activating chondrocyte proliferation. Binds to the minimal GLI-consensus sequence 5'-GGGTGGTC-3'. This Mus musculus (Mouse) protein is Transcriptional activator GLI3 (Gli3).